A 282-amino-acid chain; its full sequence is Bifunctional protein FolD (282 aa).

NADP(+)-binding positions include 164–166 (GRS) and serine 189.

This sequence belongs to the tetrahydrofolate dehydrogenase/cyclohydrolase family. As to quaternary structure, homodimer.

It catalyses the reaction (6R)-5,10-methylene-5,6,7,8-tetrahydrofolate + NADP(+) = (6R)-5,10-methenyltetrahydrofolate + NADPH. The catalysed reaction is (6R)-5,10-methenyltetrahydrofolate + H2O = (6R)-10-formyltetrahydrofolate + H(+). It functions in the pathway one-carbon metabolism; tetrahydrofolate interconversion. Its function is as follows. Catalyzes the oxidation of 5,10-methylenetetrahydrofolate to 5,10-methenyltetrahydrofolate and then the hydrolysis of 5,10-methenyltetrahydrofolate to 10-formyltetrahydrofolate. This Lactobacillus gasseri (strain ATCC 33323 / DSM 20243 / BCRC 14619 / CIP 102991 / JCM 1131 / KCTC 3163 / NCIMB 11718 / NCTC 13722 / AM63) protein is Bifunctional protein FolD.